Reading from the N-terminus, the 761-residue chain is Phosphoribosylformylglycinamidine synthase subunit PurL (761 aa).

His-58 is a catalytic residue. 2 residues coordinate ATP: Tyr-61 and Lys-105. Glu-107 contacts Mg(2+). Substrate is bound by residues 108–111 and Arg-130; that span reads SHNH. The active-site Proton acceptor is His-109. Asp-131 contributes to the Mg(2+) binding site. Gln-259 contributes to the substrate binding site. Asp-287 provides a ligand contact to Mg(2+). 331–333 lines the substrate pocket; it reads ESQ. ATP is bound by residues Asn-519 and Gly-556. Residue Asn-557 coordinates Mg(2+). Ser-559 contributes to the substrate binding site.

The protein belongs to the FGAMS family. Monomer. Part of the FGAM synthase complex composed of 1 PurL, 1 PurQ and 2 PurS subunits.

Its subcellular location is the cytoplasm. The enzyme catalyses N(2)-formyl-N(1)-(5-phospho-beta-D-ribosyl)glycinamide + L-glutamine + ATP + H2O = 2-formamido-N(1)-(5-O-phospho-beta-D-ribosyl)acetamidine + L-glutamate + ADP + phosphate + H(+). Its pathway is purine metabolism; IMP biosynthesis via de novo pathway; 5-amino-1-(5-phospho-D-ribosyl)imidazole from N(2)-formyl-N(1)-(5-phospho-D-ribosyl)glycinamide: step 1/2. Part of the phosphoribosylformylglycinamidine synthase complex involved in the purines biosynthetic pathway. Catalyzes the ATP-dependent conversion of formylglycinamide ribonucleotide (FGAR) and glutamine to yield formylglycinamidine ribonucleotide (FGAM) and glutamate. The FGAM synthase complex is composed of three subunits. PurQ produces an ammonia molecule by converting glutamine to glutamate. PurL transfers the ammonia molecule to FGAR to form FGAM in an ATP-dependent manner. PurS interacts with PurQ and PurL and is thought to assist in the transfer of the ammonia molecule from PurQ to PurL. The polypeptide is Phosphoribosylformylglycinamidine synthase subunit PurL (Rhodococcus opacus (strain B4)).